A 232-amino-acid chain; its full sequence is Multiple organellar RNA editing factor 6, mitochondrial (232 aa).

A mitochondrion-targeting transit peptide spans 1–67 (MAKTLSRSTA…TIRTRMDRSG (67 aa)). Positions 208 to 232 (TNQRGSDKPKYHDRIRNVRRRENMR) are disordered. Basic and acidic residues predominate over residues 212–232 (GSDKPKYHDRIRNVRRRENMR).

It belongs to the MORF family. As to quaternary structure, heterodimers with MORF8/RIP1, MORF3/RIP3, MORF6/RIP6, MORF7/RIP7 and MORF9/RIP9.

It localises to the mitochondrion. Its function is as follows. Involved in organellar RNA editing. Required for the processing of few RNA editing sites in mitochondria. The protein is Multiple organellar RNA editing factor 6, mitochondrial of Arabidopsis thaliana (Mouse-ear cress).